The following is a 508-amino-acid chain: MKEIREGAPGAQLDDLVAALGALAERRGGDGARAVITGVTCDSRAVTPGALFVAVRGLVADGHHFIGAAIEAGAVAVACEELPAAYSDSVTWLVVPDARKALAELSKAFYGNASDKLMLIGVTGTNGKTTTARLVTSMLNASGVAAGYIGTGLCRIGNHDIPLERTTPEPNRLHDLFRQMVDAGCRAAVMEVSSHSLVLDRVHGLFFRAAVFTNLTPEHLDFHETMEEYAEAKRLLFDQLNAEGFAVINADDPRAEFMAARLAPERVFCCSTGDNTSLCDPARRFHAVITASTVEGSKADVTFDGQSMAMQVPLPGAYNVMNMLEAFTVGVGLGIDPATALRSLAAADAIAGRMERIWSRDRSRCAVVDYAHTPDALQKALEALRAVTPADAKLAVVFGCGGNRDRQKRPEMGRIAAELADRVILTSDNPRDENPEAILDEVEAGMAGRVHLRIADRAEAIRRAVEQLGAGDILLVAGKGHEAYQEIRGVKHHFSDRECLEACFAQMK.

Ser-43 serves as a coordination point for UDP-N-acetyl-alpha-D-muramoyl-L-alanyl-D-glutamate. ATP is bound at residue 124–130 (GTNGKTT). UDP-N-acetyl-alpha-D-muramoyl-L-alanyl-D-glutamate is bound by residues 166–167 (TT), Ser-193, and Arg-201. Lys-233 bears the N6-carboxylysine mark. Residues Arg-404, 428-431 (DNPR), Gly-478, and Glu-482 contribute to the meso-2,6-diaminopimelate site. A Meso-diaminopimelate recognition motif motif is present at residues 428 to 431 (DNPR).

The protein belongs to the MurCDEF family. MurE subfamily. It depends on Mg(2+) as a cofactor. Carboxylation is probably crucial for Mg(2+) binding and, consequently, for the gamma-phosphate positioning of ATP.

It localises to the cytoplasm. The catalysed reaction is UDP-N-acetyl-alpha-D-muramoyl-L-alanyl-D-glutamate + meso-2,6-diaminopimelate + ATP = UDP-N-acetyl-alpha-D-muramoyl-L-alanyl-gamma-D-glutamyl-meso-2,6-diaminopimelate + ADP + phosphate + H(+). Its pathway is cell wall biogenesis; peptidoglycan biosynthesis. Catalyzes the addition of meso-diaminopimelic acid to the nucleotide precursor UDP-N-acetylmuramoyl-L-alanyl-D-glutamate (UMAG) in the biosynthesis of bacterial cell-wall peptidoglycan. The protein is UDP-N-acetylmuramoyl-L-alanyl-D-glutamate--2,6-diaminopimelate ligase of Chlorobaculum tepidum (strain ATCC 49652 / DSM 12025 / NBRC 103806 / TLS) (Chlorobium tepidum).